A 218-amino-acid polypeptide reads, in one-letter code: Adenylate kinase (218 aa).

An ATP-binding site is contributed by 10–15; it reads GAGKGT. The tract at residues 30–59 is NMP; it reads STGDMLRAAVKAGTPLGLEAKKVMDAGGLV. Residues threonine 31, arginine 36, 57–59, 85–88, and glutamine 92 contribute to the AMP site; these read GLV and GFPR. The tract at residues 122-159 is LID; the sequence is GRRVHVASGRTYHVKFNPPKVAGKDDETGEDLIQRADD. ATP is bound by residues arginine 123 and 132-133; that span reads TY. Positions 156 and 167 each coordinate AMP. Residue glycine 203 participates in ATP binding.

Belongs to the adenylate kinase family. Monomer.

The protein resides in the cytoplasm. The enzyme catalyses AMP + ATP = 2 ADP. Its pathway is purine metabolism; AMP biosynthesis via salvage pathway; AMP from ADP: step 1/1. Catalyzes the reversible transfer of the terminal phosphate group between ATP and AMP. Plays an important role in cellular energy homeostasis and in adenine nucleotide metabolism. This is Adenylate kinase from Laribacter hongkongensis (strain HLHK9).